The chain runs to 360 residues: Phospho-N-acetylmuramoyl-pentapeptide-transferase (360 aa).

The next 10 helical transmembrane spans lie at 27-47 (IVSLLTALFISLWMGPRLIGW), 72-92 (PTMGGLMILTSITISVLMWAY), 94-114 (SNPYVWCVLFVLLGYGIVGFV), 132-152 (WKYFWQSVIALVVAFTMYCIG), 168-188 (IMPQLGLLYILLSYFVIVGTS), 199-219 (GLAIMPTVFVAAGMGLVAWAT), 236-256 (AGELVIVCTAIVGAGLGFLWF), 263-283 (VFMGDVGSLALGGALGTIAVL), 288-308 (FLLVIMGGVFVMETLSVILQV), and 338-358 (VIVRFWIISLMLVLIGLATLK).

The protein belongs to the glycosyltransferase 4 family. MraY subfamily. It depends on Mg(2+) as a cofactor.

The protein resides in the cell inner membrane. It carries out the reaction UDP-N-acetyl-alpha-D-muramoyl-L-alanyl-gamma-D-glutamyl-meso-2,6-diaminopimeloyl-D-alanyl-D-alanine + di-trans,octa-cis-undecaprenyl phosphate = di-trans,octa-cis-undecaprenyl diphospho-N-acetyl-alpha-D-muramoyl-L-alanyl-D-glutamyl-meso-2,6-diaminopimeloyl-D-alanyl-D-alanine + UMP. It participates in cell wall biogenesis; peptidoglycan biosynthesis. Its function is as follows. Catalyzes the initial step of the lipid cycle reactions in the biosynthesis of the cell wall peptidoglycan: transfers peptidoglycan precursor phospho-MurNAc-pentapeptide from UDP-MurNAc-pentapeptide onto the lipid carrier undecaprenyl phosphate, yielding undecaprenyl-pyrophosphoryl-MurNAc-pentapeptide, known as lipid I. This chain is Phospho-N-acetylmuramoyl-pentapeptide-transferase, found in Edwardsiella ictaluri (strain 93-146).